Reading from the N-terminus, the 154-residue chain is Interleukin-7 (154 aa).

A signal peptide spans 1–25 (MFHVSFRYIFGIPPLILVLLPVTSS). Intrachain disulfides connect C27-C145, C58-C133, and C71-C116. 2 N-linked (GlcNAc...) asparagine glycosylation sites follow: N94 and N115.

It belongs to the IL-7/IL-9 family. As to quaternary structure, interacts with IL7R and CSF2RG. In terms of processing, three disulfide bonds are present.

It localises to the secreted. Hematopoietic cytokine that plays an essential role in the development, expansion, and survival of naive and memory T-cells and B-cells thereby regulating the number of mature lymphocytes and maintaining lymphoid homeostasis. Mechanistically, exerts its biological effects through a receptor composed of IL7RA subunit and the cytokine receptor common subunit gamma/CSF2RG. Binding to the receptor leads to activation of various kinases including JAK1 or JAK3 depending on the cell type and subsequently propagation of signals through activation of several downstream signaling pathways including the PI3K/Akt/mTOR or the JAK-STAT5. The protein is Interleukin-7 (Il7) of Mus musculus (Mouse).